The primary structure comprises 64 residues: Large ribosomal subunit protein bL32 (64 aa).

Positions 1–20 (MALPKYKTSRANTHSRRANW) are disordered.

Belongs to the bacterial ribosomal protein bL32 family.

The chain is Large ribosomal subunit protein bL32 from Bifidobacterium adolescentis (strain ATCC 15703 / DSM 20083 / NCTC 11814 / E194a).